A 140-amino-acid polypeptide reads, in one-letter code: Cystatin-C (140 aa).

An N-terminal signal peptide occupies residues 1 to 20; sequence MASPLRSLLFLLAVLAVAWA. The short motif at 75-79 is the Secondary area of contact element; sequence QLVAG. Intrachain disulfides connect Cys93–Cys103 and Cys117–Cys137.

Belongs to the cystatin family.

The protein resides in the secreted. Functionally, as an inhibitor of cysteine proteinases, this protein is thought to serve an important physiological role as a local regulator of this enzyme activity. This is Cystatin-C (Cst3) from Mus musculus (Mouse).